We begin with the raw amino-acid sequence, 53 residues long: uncharacterized protein (53 aa).

Positions 1–10 are enriched in polar residues; sequence MHILTRSSKN. Residues 1–25 are disordered; it reads MHILTRSSKNAFPRSRSRQDIHISS.

This is an uncharacterized protein from Saccharomyces cerevisiae (strain ATCC 204508 / S288c) (Baker's yeast).